The chain runs to 293 residues: Ribosomal protein L11 methyltransferase (293 aa).

S-adenosyl-L-methionine-binding residues include threonine 145, glycine 166, aspartate 188, and asparagine 230.

Belongs to the methyltransferase superfamily. PrmA family.

Its subcellular location is the cytoplasm. It catalyses the reaction L-lysyl-[protein] + 3 S-adenosyl-L-methionine = N(6),N(6),N(6)-trimethyl-L-lysyl-[protein] + 3 S-adenosyl-L-homocysteine + 3 H(+). Functionally, methylates ribosomal protein L11. The sequence is that of Ribosomal protein L11 methyltransferase from Escherichia coli (strain 55989 / EAEC).